Here is a 197-residue protein sequence, read N- to C-terminus: GTP cyclohydrolase-2 (197 aa).

50 to 54 (RIHSE) is a binding site for GTP. Residues C55, C66, and C68 each contribute to the Zn(2+) site. Residues Q71, 93–95 (EGR), and T115 contribute to the GTP site. D127 acts as the Proton acceptor in catalysis. The active-site Nucleophile is R129. 2 residues coordinate GTP: T150 and K155.

This sequence belongs to the GTP cyclohydrolase II family. Zn(2+) is required as a cofactor.

It carries out the reaction GTP + 4 H2O = 2,5-diamino-6-hydroxy-4-(5-phosphoribosylamino)-pyrimidine + formate + 2 phosphate + 3 H(+). The protein operates within cofactor biosynthesis; riboflavin biosynthesis; 5-amino-6-(D-ribitylamino)uracil from GTP: step 1/4. Functionally, catalyzes the conversion of GTP to 2,5-diamino-6-ribosylamino-4(3H)-pyrimidinone 5'-phosphate (DARP), formate and pyrophosphate. This Neisseria meningitidis serogroup C (strain 053442) protein is GTP cyclohydrolase-2.